Reading from the N-terminus, the 483-residue chain is V-type proton ATPase subunit H (483 aa).

Phosphoserine is present on residues Ser-59 and Ser-483.

The protein belongs to the V-ATPase H subunit family. V-ATPase is a heteromultimeric enzyme made up of two complexes: the ATP-hydrolytic V1 complex and the proton translocation V0 complex. The V1 complex consists of three catalytic AB heterodimers that form a heterohexamer, three peripheral stalks each consisting of EG heterodimers, one central rotor including subunits D and F, and the regulatory subunits C and H. The proton translocation complex V0 consists of the proton transport subunit a, a ring of proteolipid subunits c9c'', rotary subunit d, subunits e and f, and the accessory subunits ATP6AP1/Ac45 and ATP6AP2/PRR. Interacts with AP2M1.

Its subcellular location is the cytoplasmic vesicle. It localises to the clathrin-coated vesicle membrane. Its function is as follows. Subunit of the V1 complex of vacuolar(H+)-ATPase (V-ATPase), a multisubunit enzyme composed of a peripheral complex (V1) that hydrolyzes ATP and a membrane integral complex (V0) that translocates protons. V-ATPase is responsible for acidifying and maintaining the pH of intracellular compartments and in some cell types, is targeted to the plasma membrane, where it is responsible for acidifying the extracellular environment. Subunit H is essential for V-ATPase activity, but not for the assembly of the complex. Involved in the endocytosis mediated by clathrin-coated pits, required for the formation of endosomes. This chain is V-type proton ATPase subunit H (Atp6v1h), found in Mus musculus (Mouse).